We begin with the raw amino-acid sequence, 681 residues long: Auxin response factor 8 (681 aa).

The segment at residues 120-222 is a DNA-binding region (TF-B3); the sequence is FAKTLTQSDA…DLHVGIRRAK (103 aa). Disordered regions lie at residues 474 to 518 and 534 to 577; these read LRRP…AKPP and SLSG…TSSE. 2 stretches are compositionally biased toward polar residues: residues 534–555 and 564–577; these read SLSG…NTEK and GVIQ…TSSE. The 81-residue stretch at 595–675 folds into the PB1 domain; it reads PGQCKVFIES…RRLTILTDAG (81 aa).

The protein belongs to the ARF family. As to quaternary structure, homodimers and heterodimers. Expressed in roots, culms, leaves and young panicles.

The protein resides in the nucleus. Auxin response factors (ARFs) are transcriptional factors that bind specifically to the DNA sequence 5'-TGTCTC-3' found in the auxin-responsive promoter elements (AuxREs). In Oryza sativa subsp. japonica (Rice), this protein is Auxin response factor 8 (ARF8).